The chain runs to 828 residues: Periplasmic nitrate reductase (828 aa).

Positions 1–31 (MKLSRRSFMKANAVAAAAAAAGLSVPGVARA) form a signal peptide, tat-type signal. In terms of domain architecture, 4Fe-4S Mo/W bis-MGD-type spans 39-95 (IKWDKAPCRFCGTGCGVLVGTQQGRVVACQGDPDAPVNRGLNCIKGYFLPKIMYGKD). Positions 46, 49, 53, and 81 each coordinate [4Fe-4S] cluster. Mo-bis(molybdopterin guanine dinucleotide)-binding positions include Lys-83, Gln-150, Asn-175, Cys-179, 212–219 (WGSNMAEM), 243–247 (STFQH), 262–264 (QSD), Met-372, Gln-376, Asn-482, 508–509 (SD), Lys-531, Asp-558, and 718–727 (TGRVLEHWHT). Phe-794 contacts substrate. Mo-bis(molybdopterin guanine dinucleotide) is bound by residues Asn-802 and Lys-819.

It belongs to the prokaryotic molybdopterin-containing oxidoreductase family. NasA/NapA/NarB subfamily. As to quaternary structure, component of the periplasmic nitrate reductase NapAB complex composed of NapA and NapB. [4Fe-4S] cluster serves as cofactor. Mo-bis(molybdopterin guanine dinucleotide) is required as a cofactor. Post-translationally, predicted to be exported by the Tat system. The position of the signal peptide cleavage has not been experimentally proven.

The protein resides in the periplasm. The enzyme catalyses 2 Fe(II)-[cytochrome] + nitrate + 2 H(+) = 2 Fe(III)-[cytochrome] + nitrite + H2O. In terms of biological role, catalytic subunit of the periplasmic nitrate reductase complex NapAB. Receives electrons from NapB and catalyzes the reduction of nitrate to nitrite. The polypeptide is Periplasmic nitrate reductase (Salmonella paratyphi A (strain ATCC 9150 / SARB42)).